The sequence spans 40 residues: MTDTTGRIPLWLIGTLTGILVIGLIGIFFYGSYSGLGSSL.

Residues 8-28 (IPLWLIGTLTGILVIGLIGIF) traverse the membrane as a helical segment.

Belongs to the PsbJ family. PSII is composed of 1 copy each of membrane proteins PsbA, PsbB, PsbC, PsbD, PsbE, PsbF, PsbH, PsbI, PsbJ, PsbK, PsbL, PsbM, PsbT, PsbX, PsbY, PsbZ, Psb30/Ycf12, at least 3 peripheral proteins of the oxygen-evolving complex and a large number of cofactors. It forms dimeric complexes.

The protein localises to the plastid. It is found in the chloroplast thylakoid membrane. Functionally, one of the components of the core complex of photosystem II (PSII). PSII is a light-driven water:plastoquinone oxidoreductase that uses light energy to abstract electrons from H(2)O, generating O(2) and a proton gradient subsequently used for ATP formation. It consists of a core antenna complex that captures photons, and an electron transfer chain that converts photonic excitation into a charge separation. In Phalaenopsis aphrodite subsp. formosana (Moth orchid), this protein is Photosystem II reaction center protein J.